A 497-amino-acid chain; its full sequence is MTNKYLVEGSENELTTKTAAELAGLIHSREVTSREVTQAHLDRIAAVDGDIHAFLHVGQEEALNAADDVDKRLDAGEAPASALAGVPLALKDVFTTTDAPTTAASKMLEGYMSPYDATVTRKIREAGIPILGKTNMDEFAMGSSTENSAYGPTHNPWDLERTAGGSGGGSSAALAAGQAPLAIGTDTGGSIRQPAALTNTVGVKPTYGTVSRYGLIACASSLDQGGPTARTVLDTALLHEVIAGHDGFDATSVNRPVAPVVQAAREGANGDLKGMKVGVVKQFDRDGYQPGVLEAFHASVEQMRSQGAEIVEVDCPHFDDALGAYYLILPCEVSSNLARFDGMRYGLRAGDDGTRSADEVMAYTRAQGFGPEVKRRIILGTYALSVGYYDAYYLQAQRVRTLIAQDFAKAYEQVDILVSPTTPTTAFKLGEKVTDPLEMYNFDLCTLPLNLAGLAGMSLPSGLASDTGLPVGLQLMAPAFQDDRLYRVGAAFEAGRK.

Residues K91 and S166 each act as charge relay system in the active site. The disordered stretch occupies residues 143–171 (SSTENSAYGPTHNPWDLERTAGGSGGGSS). S190 functions as the Acyl-ester intermediate in the catalytic mechanism.

The protein belongs to the amidase family. GatA subfamily. Heterotrimer of A, B and C subunits.

The catalysed reaction is L-glutamyl-tRNA(Gln) + L-glutamine + ATP + H2O = L-glutaminyl-tRNA(Gln) + L-glutamate + ADP + phosphate + H(+). Functionally, allows the formation of correctly charged Gln-tRNA(Gln) through the transamidation of misacylated Glu-tRNA(Gln) in organisms which lack glutaminyl-tRNA synthetase. The reaction takes place in the presence of glutamine and ATP through an activated gamma-phospho-Glu-tRNA(Gln). This chain is Glutamyl-tRNA(Gln) amidotransferase subunit A, found in Corynebacterium glutamicum (strain R).